Consider the following 682-residue polypeptide: Probable potassium transport system protein Kup (682 aa).

A run of 12 helical transmembrane segments spans residues 13–33 (GLLV…LYVM), 55–75 (ISLI…LIAL), 98–118 (WLVI…TLTP), 138–158 (IPVP…LFLF), 171–191 (TFGP…IMNL), 217–237 (VGVL…ALYS), 250–270 (SWPY…VWIL), 295–315 (FFAI…LITG), 344–364 (LFIP…VFLF), 375–395 (GLAI…YLSL), 405–425 (VFLL…LAKF), and 428–448 (GGYV…IWYF).

It belongs to the HAK/KUP transporter (TC 2.A.72) family.

The protein localises to the cell membrane. It catalyses the reaction K(+)(in) + H(+)(in) = K(+)(out) + H(+)(out). Transport of potassium into the cell. Likely operates as a K(+):H(+) symporter. The chain is Probable potassium transport system protein Kup from Lactobacillus gasseri (strain ATCC 33323 / DSM 20243 / BCRC 14619 / CIP 102991 / JCM 1131 / KCTC 3163 / NCIMB 11718 / NCTC 13722 / AM63).